The following is a 343-amino-acid chain: Cell cycle control protein 50C (343 aa).

At 1 to 34 (MKRKCQDYESRLPDNTAVKQQQLPAFRLQLTASE) the chain is on the cytoplasmic side. A helical transmembrane segment spans residues 35–55 (ILSGFFAIGLFCLGMGIILLL). At 56-306 (SAKSIKEVEI…STLTWSGGSS (251 aa)) the chain is on the extracellular side. 4 N-linked (GlcNAc...) asparagine glycosylation sites follow: Asn66, Asn164, Asn205, and Asn265. A helical transmembrane segment spans residues 307 to 327 (LFLALAYLVTGAVTLLASFSM). At 328 to 343 (MALHLKLKERKTFFLQ) the chain is on the cytoplasmic side.

The protein belongs to the CDC50/LEM3 family.

Its subcellular location is the membrane. The protein is Cell cycle control protein 50C (TMEM30C) of Bos taurus (Bovine).